We begin with the raw amino-acid sequence, 373 residues long: Securin (373 aa).

Residues 1–10 (MMPANEDKEN) are compositionally biased toward basic and acidic residues. The segment at 1–27 (MMPANEDKENNIVYTGNESSGINFPQT) is disordered. A compositionally biased stretch (polar residues) spans 12-26 (IVYTGNESSGINFPQ). A D-box motif is present at residues 85–88 (RLPL). Residues 177 to 278 (ADSGKNEESS…LPYVPEGYSP (102 aa)) are disordered. Phosphoserine occurs at positions 185, 186, 212, and 213. Positions 185 to 194 (SSDDDEGNED) are enriched in acidic residues. Residues 225–235 (LFNEQGGLQQL) show a composition bias toward low complexity. Positions 240-256 (TKNEQKTKNDKSDKTDD) are enriched in basic and acidic residues. Serine 277 carries the phosphoserine modification. Serine 292 carries the phosphoserine; by CDC28 modification.

This sequence belongs to the securin family. Interacts with the caspase-like ESP1, and prevents its protease activity probably by covering its active site. Interacts with CDC20. In terms of processing, phosphorylated by CDC28. The phosphorylation may be important for ESP1 localization to the nucleus. Post-translationally, ubiquitinated by the anaphase promoting complex (APC) at the onset of anaphase, conducting to its degradation.

It localises to the cytoplasm. It is found in the nucleus. Regulatory protein, which plays a central role in chromosome stability. Probably acts by blocking the action of key proteins. During the mitosis, it blocks Separase/ESP1 function, preventing the proteolysis of the cohesin complex and the subsequent segregation of the chromosomes. At the onset of anaphase, it is ubiquitinated, conducting to its destruction and to the liberation of ESP1. This is Securin (PDS1) from Saccharomyces cerevisiae (strain ATCC 204508 / S288c) (Baker's yeast).